The primary structure comprises 192 residues: Probable molybdenum cofactor guanylyltransferase (192 aa).

GTP-binding positions include 8 to 10 (LAG), lysine 20, aspartate 69, and aspartate 94. Aspartate 94 lines the Mg(2+) pocket.

It belongs to the MobA family. It depends on Mg(2+) as a cofactor.

Its subcellular location is the cytoplasm. The enzyme catalyses Mo-molybdopterin + GTP + H(+) = Mo-molybdopterin guanine dinucleotide + diphosphate. Transfers a GMP moiety from GTP to Mo-molybdopterin (Mo-MPT) cofactor (Moco or molybdenum cofactor) to form Mo-molybdopterin guanine dinucleotide (Mo-MGD) cofactor. The polypeptide is Probable molybdenum cofactor guanylyltransferase (Pyrococcus horikoshii (strain ATCC 700860 / DSM 12428 / JCM 9974 / NBRC 100139 / OT-3)).